A 155-amino-acid polypeptide reads, in one-letter code: Type 1 phosphatases regulator YPI1 (155 aa).

Residues 1–21 (MSGNQMAMGSEQQQTVGSRTV) show a composition bias toward polar residues. Disordered stretches follow at residues 1 to 56 (MSGN…WEEN) and 79 to 155 (EDEE…EKKD). Ser2 carries the N-acetylserine modification. Ser22 carries the phosphoserine modification. Residues 51–53 (VRW) carry the GLC7-binding motif. Residues 93–102 (SSSSGSSSSE) show a composition bias toward low complexity. A compositionally biased stretch (basic and acidic residues) spans 104–114 (ENEKDLDFNER). Basic residues predominate over residues 115 to 128 (RQRRLERRHRKLEK). Ser133 carries the phosphoserine modification. Residues 144 to 155 (SEYRRKQQEKKD) show a composition bias toward basic and acidic residues.

This sequence belongs to the YPI1 family. As to quaternary structure, interacts with GLC7, PPZ1 and SDS22.

It is found in the nucleus. Regulator of type 1 phosphatases which maintains protein phosphatase activity under strict control. Regulates the nuclear localization of type 1 phosphatase GLC7 and SDS22, and is involved in the regulation of mRNA 3'-end processing. May also regulate the activity of type 1 phosphatase PPZ1. The protein is Type 1 phosphatases regulator YPI1 (YPI1) of Saccharomyces cerevisiae (strain YJM789) (Baker's yeast).